A 187-amino-acid chain; its full sequence is Flavin prenyltransferase UbiX (187 aa).

Residues 9-11 (GSS), threonine 34, 88-91 (SISS), and arginine 123 contribute to the FMN site. Residues tyrosine 153 and lysine 169 each coordinate dimethylallyl phosphate.

Belongs to the UbiX/PAD1 family.

The enzyme catalyses dimethylallyl phosphate + FMNH2 = prenylated FMNH2 + phosphate. Flavin prenyltransferase that catalyzes the synthesis of the prenylated FMN cofactor (prenyl-FMN) for 4-hydroxy-3-polyprenylbenzoic acid decarboxylase UbiD. The prenyltransferase is metal-independent and links a dimethylallyl moiety from dimethylallyl monophosphate (DMAP) to the flavin N5 and C6 atoms of FMN. In Campylobacter jejuni subsp. jejuni serotype O:2 (strain ATCC 700819 / NCTC 11168), this protein is Flavin prenyltransferase UbiX.